The chain runs to 232 residues: Single-stranded DNA-binding protein (232 aa).

The interval 189–232 (DWADEVEENGYVASGSAKASKPRDEESWDEDDEESEEADEDGDF) is disordered. A dimerization and interaction with the viral DNA polymerase and helicase region spans residues 212–232 (DEESWDEDDEESEEADEDGDF). The span at 214–232 (ESWDEDDEESEEADEDGDF) shows a compositional bias: acidic residues.

The protein belongs to the Teseptimavirus single-stranded DNA-binding protein family. Homodimer. Interacts (via C-terminus) with the viral DNA polymerase. Interacts with the viral helicase/primase. Part of the replicase complex that includes the DNA polymerase, host thioredoxin, the primase/helicase and the single-stranded DNA binding protein.

In terms of biological role, single-stranded DNA-binding protein that participates in viral DNA replication, formation of concatemers, recombination and repair of double-stranded breaks. Coats the lagging-strand ssDNA as the replication fork advances and stimulates the activities of viral DNA polymerase and primase/helicase. Coordinates simultaneous synthesis of leading- and lagging-strands. Together with DNA primase/helicase, promotes pairing of two homologous DNA molecules containing complementary single-stranded regions and mediates homologous DNA strand exchange. Also promotes the formation of joint molecules. Disrupts loops, hairpins and other secondary structures present on ssDNA to reduce and eliminate pausing of viral DNA polymerase at specific sites during elongation. This is Single-stranded DNA-binding protein from Escherichia phage T7 (Bacteriophage T7).